The sequence spans 223 residues: Deoxyribose-phosphate aldolase (223 aa).

The active-site Proton donor/acceptor is the Asp-91. The active-site Schiff-base intermediate with acetaldehyde is Lys-153. Residue Lys-182 is the Proton donor/acceptor of the active site.

It belongs to the DeoC/FbaB aldolase family. DeoC type 1 subfamily.

The protein resides in the cytoplasm. The enzyme catalyses 2-deoxy-D-ribose 5-phosphate = D-glyceraldehyde 3-phosphate + acetaldehyde. The protein operates within carbohydrate degradation; 2-deoxy-D-ribose 1-phosphate degradation; D-glyceraldehyde 3-phosphate and acetaldehyde from 2-deoxy-alpha-D-ribose 1-phosphate: step 2/2. In terms of biological role, catalyzes a reversible aldol reaction between acetaldehyde and D-glyceraldehyde 3-phosphate to generate 2-deoxy-D-ribose 5-phosphate. The polypeptide is Deoxyribose-phosphate aldolase (Streptococcus pyogenes serotype M2 (strain MGAS10270)).